Consider the following 420-residue polypeptide: ATP-dependent Clp protease ATP-binding subunit ClpX (420 aa).

The ClpX-type ZB domain maps to 4–57 (KTPGNNGKQKLFCSFCGKEQDAVKRLVAGPGVYICDECISLCNEIIAEDHEHSH). Cysteine 16, cysteine 19, cysteine 38, and cysteine 41 together coordinate Zn(2+). 122–129 (PTGSGKTL) serves as a coordination point for ATP.

It belongs to the ClpX chaperone family. Component of the ClpX-ClpP complex. Forms a hexameric ring that, in the presence of ATP, binds to fourteen ClpP subunits assembled into a disk-like structure with a central cavity, resembling the structure of eukaryotic proteasomes.

Its function is as follows. ATP-dependent specificity component of the Clp protease. It directs the protease to specific substrates. Can perform chaperone functions in the absence of ClpP. This is ATP-dependent Clp protease ATP-binding subunit ClpX from Leptospira interrogans serogroup Icterohaemorrhagiae serovar copenhageni (strain Fiocruz L1-130).